The primary structure comprises 677 residues: Bargin (677 aa).

Low complexity-rich tracts occupy residues 1–13 (MDRGLPGPATPAV) and 29–39 (APHAAAGPDGQ). 2 disordered regions span residues 1 to 39 (MDRGLPGPATPAVTPQPPARPQDDEEAAAPHAAAGPDGQ) and 168 to 190 (SQATKNSGSSQGLGGSPGSHSHT). The 246-residue stretch at 25–270 (EEAAAPHAAA…RENHGQADHS (246 aa)) folds into the BAR domain. Phosphoserine occurs at positions 183, 270, and 272. A Rho-GAP domain is found at 284–477 (VSLATHLQEL…ALIQSADTLF (194 aa)). The tract at residues 504-577 (SEELPSTAVP…DMARRSTGSL (74 aa)) is disordered. A compositionally biased stretch (pro residues) spans 516–530 (ATTPAPAPAPAPAPA). Ser552 and Ser558 each carry phosphoserine. The mediates non-covalent binding of poly-ubiquitin chains stretch occupies residues 574–677 (TGSLAAAVET…IADLTEGLED (104 aa)).

As to expression, expressed in brain (at protein level).

The protein resides in the cell membrane. It is found in the cytoplasm. Its subcellular location is the cytosol. Functionally, GTPase activating protein (GAP) which specifically converts GTP-bound RAC1 and CDC42 in their inactive GDP-bound form. The GAP activity is enhanced by the non-covalent binding of K-29 and K-48 polyubiquitin chains. This is Bargin from Homo sapiens (Human).